We begin with the raw amino-acid sequence, 498 residues long: Angiopoietin-1 (498 aa).

A signal peptide spans 1 to 19 (MTVFLSFAFLAAILTHIGC). N-linked (GlcNAc...) asparagine glycosylation is found at N92, N122, N154, N243, and N295. A coiled-coil region spans residues 158–254 (RLEIQLLENS…SVLQKQQLEL (97 aa)). In terms of domain architecture, Fibrinogen C-terminal spans 277–497 (KEEVKPFRDC…STTMMIRPLD (221 aa)). Intrachain disulfides connect C286–C315 and C439–C452.

Homooligomer. Interacts with TEK/TIE2. Interacts with SVEP1/polydom. Interacts with THBD; this interaction significantly inhibits the generation of activated PC and TAFIa/CPB2 by the thrombin/thrombomodulin complex.

The protein localises to the secreted. In terms of biological role, binds and activates TIE2 receptor by inducing its tyrosine phosphorylation. Implicated in endothelial developmental processes later and distinct from that of VEGF. Appears to play a crucial role in mediating reciprocal interactions between the endothelium and surrounding matrix and mesenchyme. Mediates blood vessel maturation/stability. It may play an important role in the heart early development. The polypeptide is Angiopoietin-1 (ANGPT1) (Sus scrofa (Pig)).